A 198-amino-acid polypeptide reads, in one-letter code: Holliday junction branch migration complex subunit RuvA (198 aa).

Residues 1-63 form a domain I region; it reads MYDYIKGQLT…EDAQLLFGFH (63 aa). The domain II stretch occupies residues 64-142; sequence SEEEKDVFLK…EAPKEESSKL (79 aa). The tract at residues 143-147 is flexible linker; that stretch reads PKAKH. The segment at 148 to 198 is domain III; that stretch reads QENEQLDEAIEALLALGYKATELKKIRAFFEGTSETAEQYIKSALKMLMKG.

It belongs to the RuvA family. As to quaternary structure, homotetramer. Forms an RuvA(8)-RuvB(12)-Holliday junction (HJ) complex. HJ DNA is sandwiched between 2 RuvA tetramers; dsDNA enters through RuvA and exits via RuvB. An RuvB hexamer assembles on each DNA strand where it exits the tetramer. Each RuvB hexamer is contacted by two RuvA subunits (via domain III) on 2 adjacent RuvB subunits; this complex drives branch migration. In the full resolvosome a probable DNA-RuvA(4)-RuvB(12)-RuvC(2) complex forms which resolves the HJ.

The protein localises to the cytoplasm. Its function is as follows. The RuvA-RuvB-RuvC complex processes Holliday junction (HJ) DNA during genetic recombination and DNA repair, while the RuvA-RuvB complex plays an important role in the rescue of blocked DNA replication forks via replication fork reversal (RFR). RuvA specifically binds to HJ cruciform DNA, conferring on it an open structure. The RuvB hexamer acts as an ATP-dependent pump, pulling dsDNA into and through the RuvAB complex. HJ branch migration allows RuvC to scan DNA until it finds its consensus sequence, where it cleaves and resolves the cruciform DNA. The sequence is that of Holliday junction branch migration complex subunit RuvA from Streptococcus equi subsp. zooepidemicus (strain MGCS10565).